We begin with the raw amino-acid sequence, 320 residues long: Short-chain dehydrogenase/reductase ARMGADRAFT_1169971 (320 aa).

Residues lysine 19–alanine 39 traverse the membrane as a helical segment. NADP(+) is bound by residues isoleucine 30, aspartate 78, asparagine 105, and lysine 136. Residue asparagine 157 is glycosylated (N-linked (GlcNAc...) asparagine). Serine 159 (proton donor) is an active-site residue. NADP(+) contacts are provided by tyrosine 192, lysine 196, valine 227, and serine 229. The Proton acceptor role is filled by tyrosine 192. Lysine 196 functions as the Lowers pKa of active site Tyr in the catalytic mechanism. The helical transmembrane segment at leucine 235–serine 255 threads the bilayer.

This sequence belongs to the short-chain dehydrogenases/reductases (SDR) family.

Its subcellular location is the membrane. The protein operates within secondary metabolite biosynthesis. Its function is as follows. Short-chain dehydrogenase/reductase, part of the gene cluster that mediates the biosynthesis of melleolides, a range of antifungal and phytotoxic polyketide derivatives composed of an orsellinic acid (OA) moiety esterified to various sesquiterpene alcohols. The first step in melleolides biosynthesis is performed by the delta(6)-protoilludene synthase PRO1 which catalyzes the cyclization of farnesyl diphosphate to protoilludene. The orsellinic acid synthase armB produces OA by condensing acetyl-CoA with 3 malonyl-CoA units in a three-round chain elongation reaction folowed by a C2-C7 ring closure. ArmB further catalyzes the trans-esterification of OA to the various sesquiterpene alcohols resulting from the hydroxylation of protoilludene. The melleolides cluster also includes 5 cytochrome P450 monooxygenases, 4 NAD(+)-dependent oxidoreductases, one flavin-dependent oxidoreductase, and one O-methyltransferase. The cytochrome P450 monooxygenases may be involved in protoilludene hydroxylation to elaborate melleolides with multiple alcohol groups, such as melleolide D, which carries alcohol functionalities at C-4, C-5, C-10, and C-13. The role of the NAD(+)-dependent enzymes remains unknown. Numerous melleolides, including arnamial, show 5'-O-methylation of the aromatic moiety which may be catalyzed by the methyltransferase encoded in the cluster. The flavin-dependent oxidoreductase might represent the dehydrogenase yielding the aldehyde in position 1 of arnamial and other melleolides. Finally, several halogenase localized outside of the cluster, are able to catalyze the transfer of a single chlorine atom to the melleolide backbone, resulting in a 6'-chloromelleolide product. This Armillaria gallica (Bulbous honey fungus) protein is Short-chain dehydrogenase/reductase ARMGADRAFT_1169971.